Here is a 189-residue protein sequence, read N- to C-terminus: Protein GrpE (189 aa).

Positions Met-1–Asp-24 are disordered.

The protein belongs to the GrpE family. In terms of assembly, homodimer.

The protein resides in the cytoplasm. In terms of biological role, participates actively in the response to hyperosmotic and heat shock by preventing the aggregation of stress-denatured proteins, in association with DnaK and GrpE. It is the nucleotide exchange factor for DnaK and may function as a thermosensor. Unfolded proteins bind initially to DnaJ; upon interaction with the DnaJ-bound protein, DnaK hydrolyzes its bound ATP, resulting in the formation of a stable complex. GrpE releases ADP from DnaK; ATP binding to DnaK triggers the release of the substrate protein, thus completing the reaction cycle. Several rounds of ATP-dependent interactions between DnaJ, DnaK and GrpE are required for fully efficient folding. This is Protein GrpE from Pseudomonas fluorescens (strain Pf0-1).